The primary structure comprises 351 residues: Probable glucuronosyltransferase Os10g0205300 (351 aa).

At 1-11 the chain is on the cytoplasmic side; sequence MAAPPCPPRRP. The chain crosses the membrane as a helical; Signal-anchor for type II membrane protein span at residues 12–32; sequence ISAPCFLLCFLLGFVAGLFPF. The Lumenal segment spans residues 33 to 351; sequence AHRHLHLDLH…PLKKEARPLL (319 aa). Residues 138–169 are disordered; that stretch reads SSPVPDAPQDRPRRRGRRQDRPAVDSRARQRN. Residues 156–169 show a composition bias toward basic and acidic residues; sequence QDRPAVDSRARQRN. Residue Asn259 is glycosylated (N-linked (GlcNAc...) asparagine).

This sequence belongs to the glycosyltransferase 43 family.

The protein resides in the golgi apparatus membrane. Involved in the synthesis of glucuronoxylan hemicellulose in secondary cell walls. The sequence is that of Probable glucuronosyltransferase Os10g0205300 from Oryza sativa subsp. japonica (Rice).